The following is a 607-amino-acid chain: Pyruvate decarboxylase 1 (607 aa).

Substrate is bound by residues D69 and H156. Positions 434-516 (DSWFNCQKLK…FLINNGGYTI (83 aa)) are thiamine pyrophosphate binding. Residues D484, N511, and G513 each coordinate Mg(2+). E517 contributes to the substrate binding site.

This sequence belongs to the TPP enzyme family. In terms of assembly, homotetramer. A metal cation serves as cofactor. Thiamine diphosphate is required as a cofactor. In terms of tissue distribution, highly expressed in seeds, and at lower levels in roots and siliques.

The enzyme catalyses a 2-oxocarboxylate + H(+) = an aldehyde + CO2. May play a role in ethanolic fermentation during anoxia. The protein is Pyruvate decarboxylase 1 (PDC1) of Arabidopsis thaliana (Mouse-ear cress).